The chain runs to 346 residues: MRVAVDAMGGDNAPVVEVEGAVAAAGEFGIPVTLVGDTDRVNQELAKYNCKGLDITVKHASEVVGMHDSASDAVRKKKDSSIRVAFDLVKNDEAVAVVSAGNSGATMAAGMFVLKRLKGIDRPAIAQIFPTLRGKTLVLDVGGNVDCKPLHLVQFAIMGEVYARFVMGVDNPRIGLLSNGEEESKGNDLTRETSALLKNTSLDYFGYVEGRDIFNGIVDVVVCDGFVGNVVLKLSEGLAEAVGKMLKDEIKQSLLSKIGYLLSRKAFVNFKKKVDYSEYGGAPLLGIDGVGMICHGGSNAKAIKNAIRFAHEYAQKGVNQRMAEKLQENYPLYMQQLEMLKVQAAG.

This sequence belongs to the PlsX family. In terms of assembly, homodimer. Probably interacts with PlsY.

The protein localises to the cytoplasm. The enzyme catalyses a fatty acyl-[ACP] + phosphate = an acyl phosphate + holo-[ACP]. Its pathway is lipid metabolism; phospholipid metabolism. Catalyzes the reversible formation of acyl-phosphate (acyl-PO(4)) from acyl-[acyl-carrier-protein] (acyl-ACP). This enzyme utilizes acyl-ACP as fatty acyl donor, but not acyl-CoA. This Geotalea uraniireducens (strain Rf4) (Geobacter uraniireducens) protein is Phosphate acyltransferase.